Here is a 449-residue protein sequence, read N- to C-terminus: 4-aminobutyrate aminotransferase (449 aa).

Residue Lys-294 is modified to N6-(pyridoxal phosphate)lysine.

Belongs to the class-III pyridoxal-phosphate-dependent aminotransferase family. Requires pyridoxal 5'-phosphate as cofactor.

The catalysed reaction is 4-aminobutanoate + 2-oxoglutarate = succinate semialdehyde + L-glutamate. It catalyses the reaction (S)-3-amino-2-methylpropanoate + 2-oxoglutarate = 2-methyl-3-oxopropanoate + L-glutamate. Its pathway is amino-acid degradation; 4-aminobutanoate degradation. The chain is 4-aminobutyrate aminotransferase (gabT) from Mycobacterium bovis (strain ATCC BAA-935 / AF2122/97).